We begin with the raw amino-acid sequence, 382 residues long: D-galactonate dehydratase (382 aa).

Residue D183 participates in Mg(2+) binding. H185 serves as the catalytic Proton donor. Residues E209 and E235 each coordinate Mg(2+). The active-site Proton acceptor is the H285.

The protein belongs to the mandelate racemase/muconate lactonizing enzyme family. GalD subfamily. Mg(2+) is required as a cofactor.

It carries out the reaction D-galactonate = 2-dehydro-3-deoxy-D-galactonate + H2O. It functions in the pathway carbohydrate acid metabolism; D-galactonate degradation; D-glyceraldehyde 3-phosphate and pyruvate from D-galactonate: step 1/3. Catalyzes the dehydration of D-galactonate to 2-keto-3-deoxy-D-galactonate. The sequence is that of D-galactonate dehydratase from Escherichia coli (strain UTI89 / UPEC).